A 346-amino-acid chain; its full sequence is Transcription factor 19 (346 aa).

An FHA domain is found at 31–88 (YRLGCRADLCDVALRPQQEPGFISEVHAELHAERRGDDWRVSLEDHSSQGTLVNNVRL). At Ser-78 the chain carries Phosphoserine. Disordered stretches follow at residues 136-168 (PRSR…TLSP) and 190-289 (LTFS…AAGG). Over residues 138–147 (SRGEEGETRA) the composition is skewed to basic and acidic residues. The span at 190-208 (LTFSRSGSGPQNPPVSTTP) shows a compositional bias: polar residues. Basic and acidic residues predominate over residues 250-260 (EPRKKLLRVEK). A PHD-type zinc finger spans residues 294 to 343 (AAPCCCLPQEETVAWVQCDGCDTWFHVACVGCSIQAAKEADFRCPGCRVG). Positions 297, 299, 311, 314, 319, 322, 337, and 340 each coordinate Zn(2+).

The protein localises to the nucleus. Functionally, potential transcription factor that may play a role in the regulation of genes involved in cell cycle G1/S transition. May bind to regulatory elements of genes, including the promoter of the transcription factor FOXO1. The protein is Transcription factor 19 (TCF19) of Sus scrofa (Pig).